Here is a 414-residue protein sequence, read N- to C-terminus: Serine/threonine transporter SstT (414 aa).

Helical transmembrane passes span 22 to 42 (GLVL…TIGF), 54 to 74 (IFVK…VMAA), 89 to 109 (IIVL…IAGF), 148 to 168 (AIFK…GLAL), 189 to 209 (IVHV…AETL), 223 to 243 (LLAV…PILV), 305 to 325 (MAGA…TLGL), and 337 to 357 (IVAA…LLLI).

This sequence belongs to the dicarboxylate/amino acid:cation symporter (DAACS) (TC 2.A.23) family.

It localises to the cell inner membrane. The enzyme catalyses L-serine(in) + Na(+)(in) = L-serine(out) + Na(+)(out). It carries out the reaction L-threonine(in) + Na(+)(in) = L-threonine(out) + Na(+)(out). Its function is as follows. Involved in the import of serine and threonine into the cell, with the concomitant import of sodium (symport system). The chain is Serine/threonine transporter SstT from Haemophilus influenzae (strain PittGG).